Here is a 383-residue protein sequence, read N- to C-terminus: Arginine biosynthesis bifunctional protein ArgJ (383 aa).

6 residues coordinate substrate: Thr146, Lys168, Thr179, Glu259, Asn378, and Thr383. Residue Thr179 is the Nucleophile of the active site.

Belongs to the ArgJ family. As to quaternary structure, heterotetramer of two alpha and two beta chains.

Its subcellular location is the cytoplasm. The enzyme catalyses N(2)-acetyl-L-ornithine + L-glutamate = N-acetyl-L-glutamate + L-ornithine. It carries out the reaction L-glutamate + acetyl-CoA = N-acetyl-L-glutamate + CoA + H(+). The protein operates within amino-acid biosynthesis; L-arginine biosynthesis; L-ornithine and N-acetyl-L-glutamate from L-glutamate and N(2)-acetyl-L-ornithine (cyclic): step 1/1. It functions in the pathway amino-acid biosynthesis; L-arginine biosynthesis; N(2)-acetyl-L-ornithine from L-glutamate: step 1/4. Functionally, catalyzes two activities which are involved in the cyclic version of arginine biosynthesis: the synthesis of N-acetylglutamate from glutamate and acetyl-CoA as the acetyl donor, and of ornithine by transacetylation between N(2)-acetylornithine and glutamate. The chain is Arginine biosynthesis bifunctional protein ArgJ from Thermobifida fusca (strain YX).